The sequence spans 89 residues: Elongation factor 1-beta (89 aa).

The protein belongs to the EF-1-beta/EF-1-delta family.

Its function is as follows. Promotes the exchange of GDP for GTP in EF-1-alpha/GDP, thus allowing the regeneration of EF-1-alpha/GTP that could then be used to form the ternary complex EF-1-alpha/GTP/AAtRNA. The sequence is that of Elongation factor 1-beta from Methanobrevibacter smithii (strain ATCC 35061 / DSM 861 / OCM 144 / PS).